The primary structure comprises 101 residues: Small ribosomal subunit protein uS14 (101 aa).

Residues 51-70 (LPRDSSPSRQRNRCRQTGRP) are disordered.

Belongs to the universal ribosomal protein uS14 family. Part of the 30S ribosomal subunit. Contacts proteins S3 and S10.

Functionally, binds 16S rRNA, required for the assembly of 30S particles and may also be responsible for determining the conformation of the 16S rRNA at the A site. This chain is Small ribosomal subunit protein uS14, found in Salmonella arizonae (strain ATCC BAA-731 / CDC346-86 / RSK2980).